The chain runs to 243 residues: uncharacterized protein (243 aa).

The segment at 71 to 120 (KRTNVSQRNRKKGIKNNRPHKDINSSPDWGNAHRGTDWQSEKANGMNRAK) is disordered. Residues 78 to 88 (RNRKKGIKNNR) are compositionally biased toward basic residues. The residue at position 96 (Ser-96) is a Phosphoserine.

This is an uncharacterized protein from Saccharomyces cerevisiae (strain ATCC 204508 / S288c) (Baker's yeast).